Reading from the N-terminus, the 176-residue chain is Cytochrome c oxidase subunit 5b-1, mitochondrial (176 aa).

The transit peptide at 1–55 directs the protein to the mitochondrion; that stretch reads MWRRIVSSQLKTLAADVVAASPRRSIAATTRPVGFYLAANRSAISASSFVIPRRF. Zn(2+) is bound by residues Cys122, Cys146, and Cys149. The segment at 157–176 is disordered; the sequence is VVGPGGPPDGHGDEDDEHHH.

The protein belongs to the cytochrome c oxidase subunit 5B (TC 3.D.4.11) family.

It localises to the mitochondrion inner membrane. Functionally, this protein is one of the nuclear-coded polypeptide chains of cytochrome c oxidase, the terminal oxidase in mitochondrial electron transport. This is Cytochrome c oxidase subunit 5b-1, mitochondrial (COX5B-1) from Arabidopsis thaliana (Mouse-ear cress).